The chain runs to 59 residues: Large ribosomal subunit protein uL30 (59 aa).

This sequence belongs to the universal ribosomal protein uL30 family. As to quaternary structure, part of the 50S ribosomal subunit.

In Leptospira borgpetersenii serovar Hardjo-bovis (strain JB197), this protein is Large ribosomal subunit protein uL30.